The following is a 314-amino-acid chain: MTEAQLTLPTTKLSPTQKTQFIKLEKKLRRNVGQAIAQYNMIEDGDKVMVCLSGGKDSYAMLSILMLLKESAPIHFDIIAVNLDQKQPGFPEHILPEYLDKLGIEYHIVEEDTYGIVKEKVPEGKTTCSLCSRLRRAVLYKAAKKIGATKIALGHHRDDMIETLMLNMFYGGKMKAMPAKLVSDNGEHVVIRPLAFCKESELIQYSELKHFPIIPCNLCGSQPNMQRQNIKRMLNDWHDQFPGRIESMFTAMQNVVPSHLCDSNLFDFKSINSTSGIINGGDTAFDEVAIEAPQDLSMKNQPNADQLLNVVEVK.

Positions Ser53–Ser58 match the PP-loop motif motif. Positions 128, 131, and 219 each coordinate [4Fe-4S] cluster.

It belongs to the TtcA family. In terms of assembly, homodimer. The cofactor is Mg(2+). [4Fe-4S] cluster is required as a cofactor.

It is found in the cytoplasm. It carries out the reaction cytidine(32) in tRNA + S-sulfanyl-L-cysteinyl-[cysteine desulfurase] + AH2 + ATP = 2-thiocytidine(32) in tRNA + L-cysteinyl-[cysteine desulfurase] + A + AMP + diphosphate + H(+). It participates in tRNA modification. In terms of biological role, catalyzes the ATP-dependent 2-thiolation of cytidine in position 32 of tRNA, to form 2-thiocytidine (s(2)C32). The sulfur atoms are provided by the cysteine/cysteine desulfurase (IscS) system. The chain is tRNA-cytidine(32) 2-sulfurtransferase from Colwellia psychrerythraea (strain 34H / ATCC BAA-681) (Vibrio psychroerythus).